We begin with the raw amino-acid sequence, 118 residues long: Large ribosomal subunit protein uL22 (118 aa).

It belongs to the universal ribosomal protein uL22 family. As to quaternary structure, part of the 50S ribosomal subunit.

Its function is as follows. This protein binds specifically to 23S rRNA; its binding is stimulated by other ribosomal proteins, e.g. L4, L17, and L20. It is important during the early stages of 50S assembly. It makes multiple contacts with different domains of the 23S rRNA in the assembled 50S subunit and ribosome. In terms of biological role, the globular domain of the protein is located near the polypeptide exit tunnel on the outside of the subunit, while an extended beta-hairpin is found that lines the wall of the exit tunnel in the center of the 70S ribosome. The chain is Large ribosomal subunit protein uL22 from Thermomicrobium roseum (strain ATCC 27502 / DSM 5159 / P-2).